The primary structure comprises 371 residues: MTRPKTFFDISIGGKPQGRIVFELYNDIVPKTAENFLKLCEGNAGMAKTKPDVPLSYKGSIFHRVIKDFMCQFGDFTNFNGTGGESIYDEKFEDENFTVKHDKPFLLSMANAGPNTNGSQAFITCVPTPHLDGKHVVFGEVIQGKRIVRLIENQQCDQENNKPLRDVKIDDCGVLPDDYQVPENAEATPTDEYGDNYEDVLKQDEKVDLKNFDTVLKAIETVKNIGTEQFKKQNYSVALEKYVKCDKFLKEYFPEDLEKEQIEKINQLKVSIPLNIAICALKLKDYKQVLVASSEVLYAEAADEKAKAKALYRRGLAYYHVNDTDMALNDLEMATTFQPNDAAILKAIHNTKLKRKQQNEKAKKSLSKMFS.

The PPIase cyclophilin-type domain maps to Phe7–Val174. TPR repeat units follow at residues Ile219–Tyr252, Val270–Asp303, and Ala308–Asp341.

It belongs to the cyclophilin-type PPIase family. PPIase D subfamily. Interacts with RPD3.

It localises to the cytoplasm. The enzyme catalyses [protein]-peptidylproline (omega=180) = [protein]-peptidylproline (omega=0). PPIases accelerate the folding of proteins. It catalyzes the cis-trans isomerization of proline imidic peptide bonds in oligopeptides. The protein is Peptidyl-prolyl cis-trans isomerase CPR6 (CPR6) of Saccharomyces cerevisiae (strain ATCC 204508 / S288c) (Baker's yeast).